A 483-amino-acid chain; its full sequence is Glutathione reductase (483 aa).

Met1 bears the N-acetylmethionine mark. Leu2 is subject to N-acetylserine. Ser33 and Gly34 together coordinate FAD. Residue Ser33 participates in glutathione binding. Position 40 (Arg40) interacts with glutathione. FAD contacts are provided by Glu53, Thr60, Cys61, and Lys69. Cys61 and Cys66 are disulfide-bonded. Residue Tyr123 coordinates glutathione. Residue Ala139 participates in FAD binding. NADP(+) is bound by residues Ala205, Ile208, Glu211, Arg228, and Arg234. Thr243 serves as a coordination point for glutathione. Asn278 carries an N-linked (GlcNAc...) asparagine glycan. Gly294 is an NADP(+) binding site. Asp334 lines the FAD pocket. Glu340 serves as a coordination point for NADP(+). Thr342 serves as a coordination point for FAD. Arg350 provides a ligand contact to glutathione. Val375 contributes to the NADP(+) binding site. Lys425 contributes to the glutathione binding site. His472 contributes to the FAD binding site. His472 serves as the catalytic Proton acceptor.

The protein belongs to the class-I pyridine nucleotide-disulfide oxidoreductase family. In terms of assembly, homodimer. FAD is required as a cofactor.

It localises to the cytoplasm. The protein resides in the nucleus. The protein localises to the mitochondrion. Its subcellular location is the peroxisome. It catalyses the reaction 2 glutathione + NADP(+) = glutathione disulfide + NADPH + H(+). Its function is as follows. Catalyzes the reduction of glutathione disulfide (GSSG) to reduced glutathione (GSH). Constitutes the major mechanism to maintain a high GSH:GSSG ratio in the cytosol. The protein is Glutathione reductase of Saccharomyces cerevisiae (strain ATCC 204508 / S288c) (Baker's yeast).